The sequence spans 170 residues: Adenine phosphoribosyltransferase (170 aa).

The protein belongs to the purine/pyrimidine phosphoribosyltransferase family. In terms of assembly, homodimer.

The protein localises to the cytoplasm. The enzyme catalyses AMP + diphosphate = 5-phospho-alpha-D-ribose 1-diphosphate + adenine. It participates in purine metabolism; AMP biosynthesis via salvage pathway; AMP from adenine: step 1/1. Functionally, catalyzes a salvage reaction resulting in the formation of AMP, that is energically less costly than de novo synthesis. The protein is Adenine phosphoribosyltransferase of Streptococcus sanguinis (strain SK36).